The chain runs to 243 residues: GrpE protein homolog, mitochondrial (243 aa).

The tract at residues 42–75 is disordered; the sequence is TEASKKEGKEDKAEAQGSQEPETAAETNKEAEGA. Positions 44–55 are enriched in basic and acidic residues; the sequence is ASKKEGKEDKAE.

The protein belongs to the GrpE family. Component of the PAM complex, at least composed of mtHsp70, MGE1, TIM44, PAM16, PAM17 and PAM18.

The protein resides in the mitochondrion matrix. Functionally, essential component of the PAM complex, a complex required for the translocation of transit peptide-containing proteins from the inner membrane into the mitochondrial matrix in an ATP-dependent manner. Seems to control the nucleotide-dependent binding of SSC1 to substrate proteins. The sequence is that of GrpE protein homolog, mitochondrial (mge1) from Debaryomyces hansenii (strain ATCC 36239 / CBS 767 / BCRC 21394 / JCM 1990 / NBRC 0083 / IGC 2968) (Yeast).